Here is a 628-residue protein sequence, read N- to C-terminus: RING finger protein 112 (628 aa).

An RING-type zinc finger spans residues 57-98 (CSICLERPREPISLDCGHDFCPRCFSTHRVPGCGPPCCPECR). Residues 132 to 628 (AVRAEPLLLV…GDREPLLQEE (497 aa)) are interaction with ZBTB16. Residues 167–409 (DTPVCLLAVL…RCPGYWSEGR (243 aa)) enclose the GB1/RHD3-type G domain. 318-319 (RD) serves as a coordination point for GTP. 2 helical membrane passes run 544–564 (LAAV…GVVG) and 577–597 (GMVA…GGGV).

This sequence belongs to the TRAFAC class dynamin-like GTPase superfamily. GB1/RHD3 GTPase family. GB1 subfamily. As to quaternary structure, self-associates. Interacts with SP1 in an oxidative stress-regulated manner. Interacts with SIGMAR1 in an oxidative stress-regulated manner. Interacts with ZBTB16 (via C2H2-type zinc finger domains 1 and 2). Auto-ubiquitinated.

It is found in the membrane. It localises to the cytoplasm. The protein resides in the nucleus. Its subcellular location is the nuclear body. The protein localises to the nucleoplasm. It is found in the endosome. It localises to the cytoplasmic vesicle. The protein resides in the secretory vesicle. Its subcellular location is the synaptic vesicle. The protein localises to the postsynaptic density. It is found in the perikaryon. It localises to the cell projection. The protein resides in the neuron projection. The catalysed reaction is S-ubiquitinyl-[E2 ubiquitin-conjugating enzyme]-L-cysteine + [acceptor protein]-L-lysine = [E2 ubiquitin-conjugating enzyme]-L-cysteine + N(6)-ubiquitinyl-[acceptor protein]-L-lysine.. The protein operates within protein modification; protein ubiquitination. E3 ubiquitin-protein ligase that plays an important role in neuronal differentiation, including neurogenesis and gliogenesis, during brain development. During embryonic development initiates neuronal differentiation by inducing cell cycle arrest at the G0/G1 phase through up-regulation of cell-cycle regulatory proteins. Plays a role not only in the fetal period during the development of the nervous system, but also in the adult brain, where it is involved in the maintenance of neural functions and protection of the nervous tissue cells from oxidative stress-induced damage. Exhibits GTPase and E3 ubiquitin-protein ligase activities. Regulates dendritic spine density and synaptic neurotransmission; its ability to hydrolyze GTP is involved in the maintenance of dendritic spine density. The sequence is that of RING finger protein 112 (RNF112) from Bos taurus (Bovine).